A 163-amino-acid chain; its full sequence is Ribonuclease P protein subunit p25-like protein (163 aa).

Disordered regions lie at residues 1-24 (MEQYRRAGSVELPASSPMPQLPPD) and 126-163 (LDPSECGYQPPGAPPGLGSIPSPSCGPRPRRRARDTRS). Positions 153-163 (RPRRRARDTRS) are enriched in basic residues.

The protein belongs to the histone-like Alba family.

It localises to the nucleus. May be a component of ribonuclease P or MRP. The protein is Ribonuclease P protein subunit p25-like protein (Rpp25l) of Mus musculus (Mouse).